Here is a 602-residue protein sequence, read N- to C-terminus: Threonine--tRNA ligase (602 aa).

A catalytic region spans residues 208–499 (DHRKLGTELK…LTEHCAGEFP (292 aa)). Cysteine 300, histidine 351, and histidine 476 together coordinate Zn(2+).

The protein belongs to the class-II aminoacyl-tRNA synthetase family. As to quaternary structure, homodimer. Zn(2+) serves as cofactor.

Its subcellular location is the cytoplasm. It carries out the reaction tRNA(Thr) + L-threonine + ATP = L-threonyl-tRNA(Thr) + AMP + diphosphate + H(+). Functionally, catalyzes the attachment of threonine to tRNA(Thr) in a two-step reaction: L-threonine is first activated by ATP to form Thr-AMP and then transferred to the acceptor end of tRNA(Thr). Also edits incorrectly charged L-seryl-tRNA(Thr). The sequence is that of Threonine--tRNA ligase from Campylobacter jejuni subsp. jejuni serotype O:6 (strain 81116 / NCTC 11828).